The sequence spans 626 residues: Leucine aminopeptidase 2-1 (626 aa).

Substrate contacts are provided by residues 134–136 (QCQ) and 259–264 (PYGGME). Histidine 288 contacts Zn(2+). The Proton acceptor role is filled by glutamate 289. Residues histidine 292 and glutamate 311 each contribute to the Zn(2+) site. Tyrosine 389 functions as the Proton donor in the catalytic mechanism.

It belongs to the peptidase M1 family. Zn(2+) is required as a cofactor.

The protein resides in the cytoplasm. The protein localises to the nucleus. The enzyme catalyses an epoxide + H2O = an ethanediol. Its function is as follows. Aminopeptidase that preferentially cleaves di- and tripeptides. Also has low epoxide hydrolase activity (in vitro). Can hydrolyze the epoxide leukotriene LTA(4) but it forms preferentially 5,6-dihydroxy-7,9,11,14-eicosatetraenoic acid rather than the cytokine leukotriene B(4) as the product compared to the homologous mammalian enzyme (in vitro). This Scheffersomyces stipitis (strain ATCC 58785 / CBS 6054 / NBRC 10063 / NRRL Y-11545) (Yeast) protein is Leucine aminopeptidase 2-1 (LKA4).